Consider the following 387-residue polypeptide: RNA polymerase II elongation factor ELL3 (387 aa).

Disordered stretches follow at residues 127–148 (LTEGTRESESWQDSEDEPEGHP) and 186–275 (LSNR…EEVP). The span at 230-239 (SPLQGLSNQD) shows a compositional bias: polar residues. Ser-240 carries the post-translational modification Phosphoserine. Acidic residues predominate over residues 240 to 251 (SPEEQDWGQDAD). A compositionally biased stretch (low complexity) spans 257–271 (EQSLSVQSASESPSP). The OCEL domain occupies 275–385 (PDYLLQYSTI…LILEFEEKNR (111 aa)).

It belongs to the ELL/occludin family. As to quaternary structure, interacts with AFF4. Component of the super elongation complex (SEC), at least composed of EAF1, EAF2, CDK9, MLLT3/AF9, AFF (AFF1 or AFF4), the P-TEFb complex and ELL (ELL, ELL2 or ELL3). Component of the little elongation complex (LEC), at least composed of ELL (ELL, ELL2 or ELL3), ZC3H8, ICE1 and ICE2.

It localises to the nucleus. Its function is as follows. Enhancer-binding elongation factor that specifically binds enhancers in embryonic stem cells (ES cells), marks them, and is required for their future activation during stem cell specification. Elongation factor component of the super elongation complex (SEC), a complex required to increase the catalytic rate of RNA polymerase II transcription by suppressing transient pausing by the polymerase at multiple sites along the DNA. Component of the little elongation complex (LEC), a complex required to regulate small nuclear RNA (snRNA) gene transcription by RNA polymerase II and III. Does not only bind to enhancer regions of active genes, but also marks the enhancers that are in a poised or inactive state in ES cells and is required for establishing proper RNA polymerase II occupancy at developmentally regulated genes in a cohesin-dependent manner. Probably required for priming developmentally regulated genes for later recruitment of the super elongation complex (SEC), for transcriptional activation during differentiation. Required for recruitment of P-TEFb within SEC during differentiation. Probably preloaded on germ cell chromatin, suggesting that it may prime gene activation by marking enhancers as early as in the germ cells. Promoting epithelial-mesenchymal transition (EMT). This is RNA polymerase II elongation factor ELL3 (Ell3) from Rattus norvegicus (Rat).